We begin with the raw amino-acid sequence, 504 residues long: ATP synthase subunit alpha, chloroplastic (504 aa).

Position 170–177 (170–177 (GDRQTGKT)) interacts with ATP. Threonine 257 carries the post-translational modification Phosphothreonine.

This sequence belongs to the ATPase alpha/beta chains family. In terms of assembly, F-type ATPases have 2 components, CF(1) - the catalytic core - and CF(0) - the membrane proton channel. CF(1) has five subunits: alpha(3), beta(3), gamma(1), delta(1), epsilon(1). CF(0) has four main subunits: a, b, b' and c.

It is found in the plastid. It localises to the chloroplast thylakoid membrane. The enzyme catalyses ATP + H2O + 4 H(+)(in) = ADP + phosphate + 5 H(+)(out). Its function is as follows. Produces ATP from ADP in the presence of a proton gradient across the membrane. The alpha chain is a regulatory subunit. In Nasturtium officinale (Watercress), this protein is ATP synthase subunit alpha, chloroplastic.